The following is a 270-amino-acid chain: Orotidine 5'-phosphate decarboxylase (270 aa).

The active-site Proton donor is the Lys89.

This sequence belongs to the OMP decarboxylase family. Type 2 subfamily.

It catalyses the reaction orotidine 5'-phosphate + H(+) = UMP + CO2. The protein operates within pyrimidine metabolism; UMP biosynthesis via de novo pathway; UMP from orotate: step 2/2. The polypeptide is Orotidine 5'-phosphate decarboxylase (Dehalococcoides mccartyi (strain CBDB1)).